We begin with the raw amino-acid sequence, 593 residues long: Actin-histidine N-methyltransferase (593 aa).

Residues 1 to 21 (MGKKSRVKTQKSGTGATAAVS) are disordered. Residues R75, 104–106 (EGF), R254, 275–279 (DMCNH), and 325–327 (SGF) contribute to the S-adenosyl-L-methionine site. Positions 94–314 (EGFEIANFEE…AGEQIYIFYG (221 aa)) constitute an SET domain. Residues 549 to 593 (GFVNGENSLFNGTKSESENLIKEESNRETEDAKESSSESTDEVKE) are disordered. Residues 553-562 (GENSLFNGTK) are compositionally biased toward polar residues. Over residues 563-593 (SESENLIKEESNRETEDAKESSSESTDEVKE) the composition is skewed to basic and acidic residues.

It belongs to the class V-like SAM-binding methyltransferase superfamily. SETD3 actin-histidine methyltransferase family.

It localises to the cytoplasm. It catalyses the reaction L-histidyl-[protein] + S-adenosyl-L-methionine = N(tele)-methyl-L-histidyl-[protein] + S-adenosyl-L-homocysteine + H(+). In terms of biological role, protein-histidine N-methyltransferase that specifically mediates 3-methylhistidine (tele-methylhistidine) methylation of actin at 'His-73'. Does not have protein-lysine N-methyltransferase activity and probably only catalyzes histidine methylation of actin. In Gallus gallus (Chicken), this protein is Actin-histidine N-methyltransferase.